The sequence spans 181 residues: Adenylate kinase (181 aa).

Position 10-15 (10-15 (GAGKGT)) interacts with ATP. Positions 30 to 59 (STGDLFRANISQQTPLGREAQKYMDAGDLV) are NMP. Residues Thr31, Arg36, 57–59 (DLV), 85–88 (GYPR), and Gln92 each bind AMP. Residues 126-132 (ARGRNDD) form an LID region. Arg127 provides a ligand contact to ATP. Arg129 and Arg140 together coordinate AMP. Gly166 serves as a coordination point for ATP.

This sequence belongs to the adenylate kinase family. As to quaternary structure, monomer.

The protein localises to the cytoplasm. The catalysed reaction is AMP + ATP = 2 ADP. It participates in purine metabolism; AMP biosynthesis via salvage pathway; AMP from ADP: step 1/1. Catalyzes the reversible transfer of the terminal phosphate group between ATP and AMP. Plays an important role in cellular energy homeostasis and in adenine nucleotide metabolism. This Nocardia farcinica (strain IFM 10152) protein is Adenylate kinase.